The primary structure comprises 188 residues: Protein GrpE (188 aa).

Low complexity predominate over residues Met1–Ala22. The segment at Met1–Glu26 is disordered.

The protein belongs to the GrpE family. As to quaternary structure, homodimer.

It is found in the cytoplasm. In terms of biological role, participates actively in the response to hyperosmotic and heat shock by preventing the aggregation of stress-denatured proteins, in association with DnaK and GrpE. It is the nucleotide exchange factor for DnaK and may function as a thermosensor. Unfolded proteins bind initially to DnaJ; upon interaction with the DnaJ-bound protein, DnaK hydrolyzes its bound ATP, resulting in the formation of a stable complex. GrpE releases ADP from DnaK; ATP binding to DnaK triggers the release of the substrate protein, thus completing the reaction cycle. Several rounds of ATP-dependent interactions between DnaJ, DnaK and GrpE are required for fully efficient folding. The protein is Protein GrpE of Exiguobacterium sibiricum (strain DSM 17290 / CCUG 55495 / CIP 109462 / JCM 13490 / 255-15).